The sequence spans 690 residues: BURP domain-containing protein 14 (690 aa).

A signal peptide spans 1-26 (MAPPRHARLVAATIAVLLCHLPRSAA). The disordered stretch occupies residues 134-163 (GSSWSKSSSDGDGAAAAAAPAGGGGGGGGG). Low complexity predominate over residues 135–153 (SSWSKSSSDGDGAAAAAAP). Residues 154–163 (AGGGGGGGGG) are compositionally biased toward gly residues. Asparagine 178 carries an N-linked (GlcNAc...) asparagine glycan. Over residues 201–211 (SNGGGGGGGGV) the composition is skewed to gly residues. Positions 201–232 (SNGGGGGGGGVDSFRRYGKGSQGRNDSFTSYE) are disordered. N-linked (GlcNAc...) asparagine glycosylation is found at asparagine 225, asparagine 317, asparagine 379, asparagine 432, asparagine 450, and asparagine 601. The BURP domain maps to 477–689 (FFRERDLVAG…FQGDMTWTVA (213 aa)).

Expressed in panicles.

This is BURP domain-containing protein 14 (BURP14) from Oryza sativa subsp. japonica (Rice).